The sequence spans 307 residues: Ribonuclease Z (307 aa).

Positions 63, 65, 67, 68, 141, 212, and 270 each coordinate Zn(2+). Catalysis depends on Asp67, which acts as the Proton acceptor.

It belongs to the RNase Z family. As to quaternary structure, homodimer. Zn(2+) is required as a cofactor.

The catalysed reaction is Endonucleolytic cleavage of RNA, removing extra 3' nucleotides from tRNA precursor, generating 3' termini of tRNAs. A 3'-hydroxy group is left at the tRNA terminus and a 5'-phosphoryl group is left at the trailer molecule.. Zinc phosphodiesterase, which displays some tRNA 3'-processing endonuclease activity. Probably involved in tRNA maturation, by removing a 3'-trailer from precursor tRNA. The sequence is that of Ribonuclease Z from Bacillus cereus (strain ATCC 10987 / NRS 248).